A 338-amino-acid chain; its full sequence is Ribosomal RNA small subunit methyltransferase C (338 aa).

Belongs to the methyltransferase superfamily. RsmC family. As to quaternary structure, monomer.

It is found in the cytoplasm. It carries out the reaction guanosine(1207) in 16S rRNA + S-adenosyl-L-methionine = N(2)-methylguanosine(1207) in 16S rRNA + S-adenosyl-L-homocysteine + H(+). Its function is as follows. Specifically methylates the guanine in position 1207 of 16S rRNA in the 30S particle. The sequence is that of Ribosomal RNA small subunit methyltransferase C from Photorhabdus laumondii subsp. laumondii (strain DSM 15139 / CIP 105565 / TT01) (Photorhabdus luminescens subsp. laumondii).